The following is a 341-amino-acid chain: Anthranilate phosphoribosyltransferase (341 aa).

Residues glycine 79, 82–83 (GD), threonine 87, 89–92 (NIST), 107–115 (KHGNRAVSS), and serine 119 each bind 5-phospho-alpha-D-ribose 1-diphosphate. Glycine 79 is an anthranilate binding site. Serine 91 is a Mg(2+) binding site. Asparagine 110 contributes to the anthranilate binding site. Position 165 (arginine 165) interacts with anthranilate. Mg(2+) contacts are provided by aspartate 224 and glutamate 225.

It belongs to the anthranilate phosphoribosyltransferase family. As to quaternary structure, homodimer. Requires Mg(2+) as cofactor.

It catalyses the reaction N-(5-phospho-beta-D-ribosyl)anthranilate + diphosphate = 5-phospho-alpha-D-ribose 1-diphosphate + anthranilate. It participates in amino-acid biosynthesis; L-tryptophan biosynthesis; L-tryptophan from chorismate: step 2/5. Catalyzes the transfer of the phosphoribosyl group of 5-phosphorylribose-1-pyrophosphate (PRPP) to anthranilate to yield N-(5'-phosphoribosyl)-anthranilate (PRA). In Bacillus cereus (strain AH187), this protein is Anthranilate phosphoribosyltransferase.